Consider the following 166-residue polypeptide: Ubiquitin-conjugating enzyme E2-18 kDa (166 aa).

Positions 5–165 (MALRRLMKEY…VRRLARKTLG (161 aa)) constitute a UBC core domain. The active-site Glycyl thioester intermediate is cysteine 90. Cysteine 90 participates in a covalent cross-link: Glycyl cysteine thioester (Cys-Gly) (interchain with G-Cter in ubiquitin).

The protein belongs to the ubiquitin-conjugating enzyme family. Post-translationally, autoubiquitinated at Cys-90; undergoes 'Lys-48'-linked polyubiquitination, which leads to proteasome-dependent protein degradation.

The catalysed reaction is S-ubiquitinyl-[E1 ubiquitin-activating enzyme]-L-cysteine + [E2 ubiquitin-conjugating enzyme]-L-cysteine = [E1 ubiquitin-activating enzyme]-L-cysteine + S-ubiquitinyl-[E2 ubiquitin-conjugating enzyme]-L-cysteine.. It functions in the pathway protein modification; protein ubiquitination. Functionally, catalyzes the covalent attachment of ubiquitin to other proteins. Functions in degradation of misfolded or regulated proteins localized in the endoplasmic reticulum (ER) lumen or membrane via the ubiquitin-proteasome system. Cognate E2 conjugating enzyme for the doa10 ubiquitin ligase complex, which is part of the ERAD-C pathway responsible for the rapid degradation of membrane proteins with misfolded cytoplasmic domains, and of the hrd1 ubiquitin ligase complex, which is part of the ERAD-L and ERAD-M pathways responsible for the rapid degradation of soluble lumenal and membrane proteins with misfolded lumenal domains (ERAD-L), or ER-membrane proteins with misfolded transmembrane domains (ERAD-M). Together with hrd1, required for the degradation of the transcription factor sre1 precursor in the absence of its binding partner scp1. Has a role in the formation of chromatin structures that influence the localization of transcriptional silencing factors. In Schizosaccharomyces pombe (strain 972 / ATCC 24843) (Fission yeast), this protein is Ubiquitin-conjugating enzyme E2-18 kDa (ubc7).